The primary structure comprises 445 residues: Phenylacetate-coenzyme A ligase (445 aa).

The protein belongs to the phenylacetyl-CoA ligase family. In terms of assembly, monomer.

The enzyme catalyses 2-phenylacetate + ATP + CoA = phenylacetyl-CoA + AMP + diphosphate. It functions in the pathway aromatic compound metabolism; phenylacetate degradation. Its function is as follows. Catalyzes the activation of phenylacetic acid (PA) to phenylacetyl-CoA (PA-CoA). Involved in the phenylalanine metabolism. In Thermus thermophilus (strain ATCC BAA-163 / DSM 7039 / HB27), this protein is Phenylacetate-coenzyme A ligase.